The chain runs to 264 residues: tRNA pseudouridine synthase A (264 aa).

Residue D51 is the Nucleophile of the active site. Y109 contacts substrate.

Belongs to the tRNA pseudouridine synthase TruA family. Homodimer.

It catalyses the reaction uridine(38/39/40) in tRNA = pseudouridine(38/39/40) in tRNA. Its function is as follows. Formation of pseudouridine at positions 38, 39 and 40 in the anticodon stem and loop of transfer RNAs. The sequence is that of tRNA pseudouridine synthase A from Pasteurella multocida (strain Pm70).